Here is a 389-residue protein sequence, read N- to C-terminus: Acyl-[acyl-carrier-protein] dehydrogenase MbtN (389 aa).

Belongs to the acyl-CoA dehydrogenase family. The cofactor is FAD.

The protein operates within siderophore biosynthesis; mycobactin biosynthesis. Its function is as follows. Catalyzes the dehydrogenation at the alpha-beta position of ACP-bound acyl chains. This results in the introduction of a double bond in the lipidic chain, which is further transferred to the epsilon-amino group of lysine residue in the mycobactin core by MbtK. The protein is Acyl-[acyl-carrier-protein] dehydrogenase MbtN (mbtN) of Mycobacterium sp. (strain MCS).